A 382-amino-acid polypeptide reads, in one-letter code: Adaptive-response sensory kinase SasA (382 aa).

In terms of domain architecture, Histidine kinase spans 160–382 (MLAHDLRSPL…CFHFTLPVYR (223 aa)). Position 163 is a phosphohistidine; by autocatalysis (H163).

As to quaternary structure, homooligomerizes. Interacts with KaiC. Participates in the KaiABC clock complex, whose core is composed of a KaiC homohexamer, 6 KaiB and up to 6 KaiA dimers. SasA and KaiB(fs) compete to bind to KaiC.

The enzyme catalyses ATP + protein L-histidine = ADP + protein N-phospho-L-histidine.. Functionally, member of the two-component regulatory system SasA/RpaA involved in genome-wide circadian gene expression. One of several clock output pathways. Participates in the Kai clock protein complex, the main circadian regulator in cyanobacteria, via its interaction with KaiC. KaiC enhances the autophosphorylation activity of SasA, which then transfers its phosphate group to RpaA to activate it. In addition to its output function, recruits fold-shifted KaiB (KaiB(fs)) to KaiC to cooperatively form the KaiB(6):KaiC(6) complex (independent of SasA kinase activity). Required for robustness of the circadian rhythm of gene expression and is involved in clock output, also required for adaptation to light/dark cycles. The protein is Adaptive-response sensory kinase SasA of Crocosphaera subtropica (strain ATCC 51142 / BH68) (Cyanothece sp. (strain ATCC 51142)).